The primary structure comprises 473 residues: Aspartyl/glutamyl-tRNA(Asn/Gln) amidotransferase subunit B (473 aa).

Belongs to the GatB/GatE family. GatB subfamily. Heterotrimer of A, B and C subunits.

It catalyses the reaction L-glutamyl-tRNA(Gln) + L-glutamine + ATP + H2O = L-glutaminyl-tRNA(Gln) + L-glutamate + ADP + phosphate + H(+). The enzyme catalyses L-aspartyl-tRNA(Asn) + L-glutamine + ATP + H2O = L-asparaginyl-tRNA(Asn) + L-glutamate + ADP + phosphate + 2 H(+). Functionally, allows the formation of correctly charged Asn-tRNA(Asn) or Gln-tRNA(Gln) through the transamidation of misacylated Asp-tRNA(Asn) or Glu-tRNA(Gln) in organisms which lack either or both of asparaginyl-tRNA or glutaminyl-tRNA synthetases. The reaction takes place in the presence of glutamine and ATP through an activated phospho-Asp-tRNA(Asn) or phospho-Glu-tRNA(Gln). The protein is Aspartyl/glutamyl-tRNA(Asn/Gln) amidotransferase subunit B of Francisella tularensis subsp. mediasiatica (strain FSC147).